The sequence spans 77 residues: Delta-conotoxin GmVIA (77 aa).

A signal peptide spans 1–22; it reads MKLTCMMIVAVLFLTAWTFVTA. Residues 23–48 constitute a propeptide that is removed on maturation; that stretch reads DDSGNGMEILFPKAGHEMENLEVSNR. 3 cysteine pairs are disulfide-bonded: Cys-52–Cys-67, Cys-59–Cys-72, and Cys-66–Cys-76.

It belongs to the conotoxin O1 superfamily. Expressed by the venom duct.

It is found in the secreted. Functionally, delta-conotoxins bind to site 6 of voltage-gated sodium channels (Nav) and inhibit the inactivation process. This toxin shows weak activity on rNav1.2/SCN2A (EC(50)=2.5 uM) and rNav1.4/SCN4A (EC(50)=4.8 uM). In vivo, injection of this peptide in the head region of garden snail induces retraction of the head and body into shell. This is followed by secretion of viscous green slime and a convulsive undulation into and out of the shell. No apparent biological activity was observed when a much greater dose of peptide was injected intraperitoneally into mice. The polypeptide is Delta-conotoxin GmVIA (Conus gloriamaris (Glory-of-the-Sea cone)).